The sequence spans 1006 residues: Pleckstrin homology domain-containing family G member 5 (1006 aa).

Disordered regions lie at residues 1-71 (MHYD…HTDD), 148-198 (PAKP…DILA), and 212-242 (EASIPGQEPPTPSSCSLPSGSSGSTNTGDSW). Acidic residues predominate over residues 36–45 (DLEEEEEESS). Basic and acidic residues-rich tracts occupy residues 151–165 (PGDEGKVEQGMKDSK) and 183–194 (ERVDAQSRRESL). Over residues 224–242 (SSCSLPSGSSGSTNTGDSW) the composition is skewed to low complexity. Residues 336-528 (HQQEAVWELL…ERFIHHVNAC (193 aa)) form the DH domain. In terms of domain architecture, PH spans 584–684 (QLLLEGSLRM…WVDTIYNAQN (101 aa)). Disordered stretches follow at residues 690-754 (RAQE…ASDG), 768-820 (DTLS…SAYG), and 837-863 (AELVPRAPESPRVPSPPPSPRLRRRTP). Positions 704–726 (LEEEEDEQEEEEEEEEEEEEGED) are enriched in acidic residues. Composition is skewed to polar residues over residues 727–754 (SGTSAASSPTIMRKSSGSPDSQHCASDG) and 769–785 (TLSSPEFDSGPFSSQSD). Thr729 is modified (phosphothreonine). Ser734 is subject to Phosphoserine. Residues 786-803 (ETSLSTTASSATPTSELL) show a composition bias toward low complexity. A compositionally biased stretch (pro residues) spans 847–856 (PRVPSPPPSP). A phosphoserine mark is found at Ser851, Ser876, and Ser881. Residues 950–979 (AGSHRKRCGDLPSGASPRVQPEPPPGVSAQ) are disordered.

In terms of assembly, interacts with GIPC1/synectin and RHOA. As to expression, predominantly expressed in the peripheral nervous system and brain. Highest expression is observed in heart, lung, kidney, testis and moderate expression is present in spleen, pancreas, skeletal muscle, ovary and liver. Weakly expressed in glioblastoma (GBM) cell lines.

It is found in the cytoplasm. Its subcellular location is the perinuclear region. The protein resides in the cell membrane. It localises to the cell junction. The protein localises to the cell projection. It is found in the lamellipodium. Functionally, functions as a guanine exchange factor (GEF) for RAB26 and thus regulates autophagy of synaptic vesicles in axon terminal of motoneurons. Involved in the control of neuronal cell differentiation. Plays a role in angiogenesis through regulation of endothelial cells chemotaxis. Also affects the migration, adhesion, and matrix/bone degradation in macrophages and osteoclasts. The chain is Pleckstrin homology domain-containing family G member 5 (PLEKHG5) from Homo sapiens (Human).